We begin with the raw amino-acid sequence, 292 residues long: NAD kinase (292 aa).

Asp73 (proton acceptor) is an active-site residue. Residues 73 to 74 (DG), 147 to 148 (NE), His158, Arg175, Asp177, 188 to 193 (TAYSLS), and Gln247 contribute to the NAD(+) site.

Belongs to the NAD kinase family. A divalent metal cation is required as a cofactor.

Its subcellular location is the cytoplasm. The enzyme catalyses NAD(+) + ATP = ADP + NADP(+) + H(+). Involved in the regulation of the intracellular balance of NAD and NADP, and is a key enzyme in the biosynthesis of NADP. Catalyzes specifically the phosphorylation on 2'-hydroxyl of the adenosine moiety of NAD to yield NADP. In Sodalis glossinidius (strain morsitans), this protein is NAD kinase.